The chain runs to 270 residues: Replication protein A 32 kDa subunit (270 aa).

The residue at position 1 (methionine 1) is an N-acetylmethionine. 2 positions are modified to phosphoserine; by PRKDC: serine 4 and serine 8. Residue threonine 21 is modified to Phosphothreonine; by PRKDC. Residues 21–41 (TQSPGGFGSPAPSQAEKKSRA) are disordered. Residue serine 23 is modified to Phosphoserine; by CDK2. Residue serine 29 is modified to Phosphoserine; by CDK1. Position 33 is a phosphoserine; by PRKDC (serine 33). Glycyl lysine isopeptide (Lys-Gly) (interchain with G-Cter in ubiquitin) cross-links involve residues lysine 37 and lysine 38. The segment at residues 74–148 (VTIVGIIRHA…KSLVAFKIMP (75 aa)) is a DNA-binding region (OB). Positions 187-270 (GMSEAGNFGG…DDHFKSTDAE (84 aa)) are interaction with RAD52, TIPIN, UNG and XPA.

This sequence belongs to the replication factor A protein 2 family. As to quaternary structure, component of the replication protein A complex (RPA/RP-A), a heterotrimeric complex composed of RPA1, RPA2 and RPA3. Interacts with PRPF19; the PRP19-CDC5L complex is recruited to the sites of DNA repair where it ubiquitinates the replication protein A complex (RPA). Interacts with SERTAD3. Interacts with TIPIN. Interacts with TIMELESS. Interacts with PPP4R2; the interaction is direct, DNA damage-dependent and mediates the recruitment of the PP4 catalytic subunit PPP4C. Interacts (hyperphosphorylated) with RAD51. Interacts with SMARCAL1; the interaction is direct and mediates the recruitment to the RPA complex of SMARCAL1. Interacts with RAD52 and XPA; those interactions are direct and associate RAD52 and XPA to the RPA complex. Interacts with FBH1. Interacts with ETAA1; the interaction is direct and promotes ETAA1 recruitment at stalled replication forks. Interacts with RFWD3. Interacts with DDI2. Interacts (in unphosphorylated form via N-terminus) with EIF4EBP3; the interaction enhances EIF4EBP3-mediated inhibition of EIF4E-mediated mRNA nuclear export. Interacts with BRIP1/FANCJ via the RPA1 subunit; following DNA damage they colocalize in foci in the nucleus. Interacts with nuclear UNG (isoform 2); this interaction mediates UNG recruitment to RPA-coated single-stranded DNA at stalled replication forks. In terms of processing, differentially phosphorylated throughout the cell cycle, becoming phosphorylated at the G1-S transition and dephosphorylated in late mitosis. Mainly phosphorylated at Ser-23 and Ser-29, by cyclin A-CDK2 and cyclin B-CDK1, respectively during DNA replication and mitosis. Dephosphorylation may require the serine/threonine-protein phosphatase 4. Phosphorylation at Ser-23 and Ser-29 is a prerequisite for further phosphorylation. Becomes hyperphosphorylated on additional residues including Ser-4, Ser-8, Thr-21 and Ser-33 in response to DNA damage. Hyperphosphorylation is mediated by ATM, ATR and PRKDC. Primarily recruited to DNA repair nuclear foci as a hypophosphorylated form it undergoes subsequent hyperphosphorylation, catalyzed by ATR. Hyperphosphorylation is required for RAD51 recruitment to chromatin and efficient DNA repair. Phosphorylation at Thr-21 depends upon RFWD3 presence. Post-translationally, DNA damage-induced 'Lys-63'-linked polyubiquitination by PRPF19 mediates ATRIP recruitment to the RPA complex at sites of DNA damage and activation of ATR. Ubiquitinated by RFWD3 at stalled replication forks in response to DNA damage: ubiquitination by RFWD3 does not lead to degradation by the proteasome and promotes removal of the RPA complex from stalled replication forks, promoting homologous recombination.

Its subcellular location is the nucleus. The protein resides in the PML body. In terms of biological role, as part of the heterotrimeric replication protein A complex (RPA/RP-A), binds and stabilizes single-stranded DNA intermediates that form during DNA replication or upon DNA stress. It prevents their reannealing and in parallel, recruits and activates different proteins and complexes involved in DNA metabolism. Thereby, it plays an essential role both in DNA replication and the cellular response to DNA damage. In the cellular response to DNA damage, the RPA complex controls DNA repair and DNA damage checkpoint activation. Through recruitment of ATRIP activates the ATR kinase a master regulator of the DNA damage response. It is required for the recruitment of the DNA double-strand break repair factors RAD51 and RAD52 to chromatin in response to DNA damage. Also recruits to sites of DNA damage proteins like XPA and XPG that are involved in nucleotide excision repair and is required for this mechanism of DNA repair. Also plays a role in base excision repair (BER) probably through interaction with UNG. Also recruits SMARCAL1/HARP, which is involved in replication fork restart, to sites of DNA damage. May also play a role in telomere maintenance. RPA stimulates 5'-3' helicase activity of BRIP1/FANCJ. In Homo sapiens (Human), this protein is Replication protein A 32 kDa subunit (RPA2).